We begin with the raw amino-acid sequence, 267 residues long: Acyl-[acyl-carrier-protein]--UDP-N-acetylglucosamine O-acyltransferase (267 aa).

It belongs to the transferase hexapeptide repeat family. LpxA subfamily. As to quaternary structure, homotrimer.

The protein resides in the cytoplasm. The catalysed reaction is a (3R)-hydroxyacyl-[ACP] + UDP-N-acetyl-alpha-D-glucosamine = a UDP-3-O-[(3R)-3-hydroxyacyl]-N-acetyl-alpha-D-glucosamine + holo-[ACP]. Its pathway is glycolipid biosynthesis; lipid IV(A) biosynthesis; lipid IV(A) from (3R)-3-hydroxytetradecanoyl-[acyl-carrier-protein] and UDP-N-acetyl-alpha-D-glucosamine: step 1/6. In terms of biological role, involved in the biosynthesis of lipid A, a phosphorylated glycolipid that anchors the lipopolysaccharide to the outer membrane of the cell. In Proteus mirabilis (strain HI4320), this protein is Acyl-[acyl-carrier-protein]--UDP-N-acetylglucosamine O-acyltransferase.